We begin with the raw amino-acid sequence, 194 residues long: Phosphoheptose isomerase (194 aa).

In terms of domain architecture, SIS spans 37-194 (IADTFKAGGK…LIEKEMVAQG (158 aa)). 52-54 (NGG) provides a ligand contact to substrate. Zn(2+) is bound by residues His-61 and Glu-65. Substrate-binding positions include Glu-65, 93–94 (ND), 119–121 (STS), Ser-124, and Gln-172. Residues Gln-172 and His-180 each coordinate Zn(2+).

The protein belongs to the SIS family. GmhA subfamily. In terms of assembly, homotetramer. Requires Zn(2+) as cofactor.

The protein resides in the cytoplasm. It carries out the reaction 2 D-sedoheptulose 7-phosphate = D-glycero-alpha-D-manno-heptose 7-phosphate + D-glycero-beta-D-manno-heptose 7-phosphate. It participates in carbohydrate biosynthesis; D-glycero-D-manno-heptose 7-phosphate biosynthesis; D-glycero-alpha-D-manno-heptose 7-phosphate and D-glycero-beta-D-manno-heptose 7-phosphate from sedoheptulose 7-phosphate: step 1/1. Functionally, catalyzes the isomerization of sedoheptulose 7-phosphate in D-glycero-D-manno-heptose 7-phosphate. The polypeptide is Phosphoheptose isomerase (Sodalis glossinidius (strain morsitans)).